We begin with the raw amino-acid sequence, 186 residues long: Ribosome maturation factor RimP (186 aa).

It belongs to the RimP family.

It is found in the cytoplasm. In terms of biological role, required for maturation of 30S ribosomal subunits. The sequence is that of Ribosome maturation factor RimP from Novosphingobium aromaticivorans (strain ATCC 700278 / DSM 12444 / CCUG 56034 / CIP 105152 / NBRC 16084 / F199).